We begin with the raw amino-acid sequence, 553 residues long: uncharacterized protein (553 aa).

Positions R26–E109 constitute an SWIB/MDM2 domain. The region spanning A150 to T275 is the Plus3 domain. Disordered regions lie at residues Q335–P357 and P447–D482. Basic and acidic residues predominate over residues E343–L353. Positions P447–P461 are enriched in polar residues. Over residues E466 to T480 the composition is skewed to acidic residues. The 55-residue stretch at K497 to R551 folds into the GYF domain.

This is an uncharacterized protein from Arabidopsis thaliana (Mouse-ear cress).